Here is a 123-residue protein sequence, read N- to C-terminus: Large ribosomal subunit protein uL29 (123 aa).

This sequence belongs to the universal ribosomal protein uL29 family. In terms of assembly, component of the large ribosomal subunit.

The protein resides in the cytoplasm. Component of the large ribosomal subunit. The ribosome is a large ribonucleoprotein complex responsible for the synthesis of proteins in the cell. The chain is Large ribosomal subunit protein uL29 (rpl35) from Hippocampus comes (Tiger tail seahorse).